Consider the following 591-residue polypeptide: Aspartate--tRNA(Asp/Asn) ligase (591 aa).

Glutamate 176 is a binding site for L-aspartate. Residues 200–203 (QLFK) are aspartate. L-aspartate is bound at residue arginine 222. ATP is bound by residues 222 to 224 (RDE) and glutamine 231. Histidine 450 contributes to the L-aspartate binding site. Glutamate 484 is a binding site for ATP. Arginine 491 serves as a coordination point for L-aspartate. 536-539 (GLDR) is an ATP binding site.

This sequence belongs to the class-II aminoacyl-tRNA synthetase family. Type 1 subfamily. Homodimer.

It localises to the cytoplasm. The enzyme catalyses tRNA(Asx) + L-aspartate + ATP = L-aspartyl-tRNA(Asx) + AMP + diphosphate. Functionally, aspartyl-tRNA synthetase with relaxed tRNA specificity since it is able to aspartylate not only its cognate tRNA(Asp) but also tRNA(Asn). Reaction proceeds in two steps: L-aspartate is first activated by ATP to form Asp-AMP and then transferred to the acceptor end of tRNA(Asp/Asn). The protein is Aspartate--tRNA(Asp/Asn) ligase of Bacillus cereus (strain ATCC 14579 / DSM 31 / CCUG 7414 / JCM 2152 / NBRC 15305 / NCIMB 9373 / NCTC 2599 / NRRL B-3711).